The primary structure comprises 428 residues: D-amino acid dehydrogenase (428 aa).

3 to 17 (VVVLGSGVVGVTSAY) contributes to the FAD binding site.

It belongs to the DadA oxidoreductase family. FAD serves as cofactor.

It carries out the reaction a D-alpha-amino acid + A + H2O = a 2-oxocarboxylate + AH2 + NH4(+). Its pathway is amino-acid degradation; D-alanine degradation; NH(3) and pyruvate from D-alanine: step 1/1. Its function is as follows. Oxidative deamination of D-amino acids. This chain is D-amino acid dehydrogenase, found in Paraburkholderia phytofirmans (strain DSM 17436 / LMG 22146 / PsJN) (Burkholderia phytofirmans).